We begin with the raw amino-acid sequence, 441 residues long: Methionine aminopeptidase 2A (441 aa).

The tract at residues 1-103 (MAIGNPEVAT…SGDFPQGEIQ (103 aa)) is disordered. The span at 18-33 (AESSNGNESQLSSDLT) shows a compositional bias: polar residues. Over residues 37 to 62 (DLAEVKEDEKDNNQEEEDGLKAEAST) the composition is skewed to basic and acidic residues. Residues 63 to 76 (KKKKKKSKSKKKKS) show a composition bias toward basic residues. H194 contributes to the substrate binding site. D214, D225, and H294 together coordinate a divalent metal cation. Residue H302 coordinates substrate. Residues E327 and E422 each coordinate a divalent metal cation.

It belongs to the peptidase M24A family. Methionine aminopeptidase eukaryotic type 2 subfamily. Co(2+) serves as cofactor. It depends on Zn(2+) as a cofactor. The cofactor is Mn(2+). Fe(2+) is required as a cofactor. Ubiquitous. Preferentially expressed in roots.

The protein localises to the cytoplasm. It carries out the reaction Release of N-terminal amino acids, preferentially methionine, from peptides and arylamides.. In terms of biological role, cotranslationally removes the N-terminal methionine from nascent proteins. The N-terminal methionine is often cleaved when the second residue in the primary sequence is small and uncharged (Met-Ala-, Cys, Gly, Pro, Ser, Thr, or Val). This is Methionine aminopeptidase 2A from Arabidopsis thaliana (Mouse-ear cress).